The primary structure comprises 426 residues: Tryptophan synthase beta chain (426 aa).

Residue K108 is modified to N6-(pyridoxal phosphate)lysine.

The protein belongs to the TrpB family. In terms of assembly, tetramer of two alpha and two beta chains. Pyridoxal 5'-phosphate is required as a cofactor.

It catalyses the reaction (1S,2R)-1-C-(indol-3-yl)glycerol 3-phosphate + L-serine = D-glyceraldehyde 3-phosphate + L-tryptophan + H2O. It participates in amino-acid biosynthesis; L-tryptophan biosynthesis; L-tryptophan from chorismate: step 5/5. Its function is as follows. The beta subunit is responsible for the synthesis of L-tryptophan from indole and L-serine. The protein is Tryptophan synthase beta chain (trpB) of Thermoplasma volcanium (strain ATCC 51530 / DSM 4299 / JCM 9571 / NBRC 15438 / GSS1).